We begin with the raw amino-acid sequence, 279 residues long: Cyanocobalamin reductase / alkylcobalamin dealkylase (279 aa).

Substrate-binding positions include Asp104, 115–118, 129–131, Cys149, and Ile160; these read ILAQ and YYQ. Residues 239-279 are disordered; that stretch reads PSEHPSTTSELPLSLLTKPQNSRRARSWLSPSVSPPVSPGP. A compositionally biased stretch (low complexity) spans 243–257; it reads PSTTSELPLSLLTKP. Phosphoserine occurs at positions 247, 272, and 276.

This sequence belongs to the MMACHC family. In terms of assembly, monomer in the absence of bound substrate. Homodimer; dimerization is triggered by binding to FMN or adenosylcobalamin. Interacts with LMBRD1 and ABCD4; the interaction ensures the transport of cobalamin from the lysosome to the cytoplasm. Forms a multiprotein complex with MMADHC, MTR and MTRR; the interaction with MTR could modulate MMACHC-dependent processing of cobalamin. Heterodimer with MMADHC; the interaction might play a role in the regulation of the balance between AdoCbl and MeCbl synthesis. FAD is required as a cofactor. It depends on FMN as a cofactor. Detected in liver and kidney (at protein level). Detected in embryos.

It is found in the cytoplasm. The protein resides in the cytosol. The enzyme catalyses 2 cob(II)alamin-[cyanocobalamin reductase] + 2 hydrogen cyanide + NADP(+) = 2 cyanocob(III)alamin + 2 apo-[cyanocobalamin reductase] + NADPH + H(+). It carries out the reaction apo-[alkylcobalamin reductase] + an R-cob(III)alamin + glutathione = cob(I)alamin-[alkylcobalamin reductase] + an S-substituted glutathione + H(+). It catalyses the reaction apo-[alkylcobalamin reductase] + methylcob(III)alamin + glutathione = S-methyl glutathione + cob(I)alamin-[alkylcobalamin reductase] + H(+). The catalysed reaction is apo-[alkylcobalamin reductase] + adenosylcob(III)alamin + glutathione = S-adenosylglutathione + cob(I)alamin-[alkylcobalamin reductase] + H(+). In terms of biological role, cobalamin (vitamin B12) cytosolic chaperone that catalyzes the reductive decyanation of cyanocob(III)alamin (cyanocobalamin, CNCbl) to yield cob(II)alamin and cyanide, using FAD or FMN as cofactors and NADPH as cosubstrate. Cyanocobalamin constitutes the inactive form of vitamin B12 introduced from the diet, and is converted into the active cofactors methylcobalamin (MeCbl) involved in methionine biosynthesis, and 5'-deoxyadenosylcobalamin (AdoCbl) involved in the TCA cycle. Forms a complex with the lysosomal transporter ABCD4 and its chaperone LMBRD1, to transport cobalamin across the lysosomal membrane into the cytosol. The processing of cobalamin in the cytosol occurs in a multiprotein complex composed of at least MMACHC, MMADHC, MTRR (methionine synthase reductase) and MTR (methionine synthase) which may contribute to shuttle safely and efficiently cobalamin towards MTR in order to produce methionine. Also acts as a glutathione transferase by catalyzing the dealkylation of the alkylcob(III)alamins MeCbl and AdoCbl, using the thiolate of glutathione for nucleophilic displacement to generate cob(I)alamin and the corresponding glutathione thioether. The conversion of incoming MeCbl or AdoCbl into a common intermediate cob(I)alamin is necessary to meet the cellular needs for both cofactors. Cysteine and homocysteine cannot substitute for glutathione in this reaction. The polypeptide is Cyanocobalamin reductase / alkylcobalamin dealkylase (Mus musculus (Mouse)).